The following is a 418-amino-acid chain: Glutamyl-tRNA reductase (418 aa).

Substrate contacts are provided by residues 49 to 52, S107, 112 to 114, and Q118; these read TCNR and EPQ. C50 functions as the Nucleophile in the catalytic mechanism. 187–192 is an NADP(+) binding site; that stretch reads GAGETI.

This sequence belongs to the glutamyl-tRNA reductase family. As to quaternary structure, homodimer.

It carries out the reaction (S)-4-amino-5-oxopentanoate + tRNA(Glu) + NADP(+) = L-glutamyl-tRNA(Glu) + NADPH + H(+). It participates in porphyrin-containing compound metabolism; protoporphyrin-IX biosynthesis; 5-aminolevulinate from L-glutamyl-tRNA(Glu): step 1/2. In terms of biological role, catalyzes the NADPH-dependent reduction of glutamyl-tRNA(Glu) to glutamate 1-semialdehyde (GSA). The sequence is that of Glutamyl-tRNA reductase from Vibrio parahaemolyticus serotype O3:K6 (strain RIMD 2210633).